Here is a 57-residue protein sequence, read N- to C-terminus: Granulin-2 (57 aa).

Cystine bridges form between Cys-4–Cys-16 and Cys-10–Cys-26.

The protein belongs to the granulin family. Granulins are disulfide bridged. Ubiquitous.

Its subcellular location is the secreted. Its function is as follows. Granulins have possible cytokine-like activity. They may play a role in inflammation, wound repair, and tissue remodeling. This is Granulin-2 from Cyprinus carpio (Common carp).